The chain runs to 381 residues: Protein kinase gsk31 (381 aa).

The Protein kinase domain maps to 25–309 (YEPCRVLGSG…AIEVLTHPFF (285 aa)). ATP contacts are provided by residues 31-39 (LGSGSFGVV) and lysine 54. The active-site Proton acceptor is the aspartate 150. At serine 184 the chain carries Phosphoserine. Tyrosine 185 is subject to Phosphotyrosine.

Belongs to the protein kinase superfamily. CMGC Ser/Thr protein kinase family. GSK-3 subfamily.

The enzyme catalyses L-seryl-[protein] + ATP = O-phospho-L-seryl-[protein] + ADP + H(+). It catalyses the reaction L-threonyl-[protein] + ATP = O-phospho-L-threonyl-[protein] + ADP + H(+). This Schizosaccharomyces pombe (strain 972 / ATCC 24843) (Fission yeast) protein is Protein kinase gsk31 (gsk31).